The chain runs to 203 residues: Guanylate kinase (203 aa).

The Guanylate kinase-like domain maps to 3-181 (GTLYIVAAPS…AVAEMCAIFT (179 aa)). 10–17 (APSGAGKS) is an ATP binding site.

This sequence belongs to the guanylate kinase family.

It localises to the cytoplasm. The catalysed reaction is GMP + ATP = GDP + ADP. Functionally, essential for recycling GMP and indirectly, cGMP. The chain is Guanylate kinase from Xanthomonas euvesicatoria pv. vesicatoria (strain 85-10) (Xanthomonas campestris pv. vesicatoria).